Reading from the N-terminus, the 283-residue chain is MTVQTSKNPQVDIAEDNAFFPSEYSLSQYTSPVSDLDGVDYPKPYRGKHKILVIAADERYLPTDNGKLFSTGNHPIETLLPLYHLHAAGFEFEVATISGLMTKFEYWAMPHKDEKVMPFFEQHKSLFRNPKKLADVVASLNADSEYAAIFVPGGHGTLIGLPESQDVAAALQWAIKNDRFVISLCHGPAAFLALRHGDNPLNGYSICAFPDAADKQTPEIGYMPGHLTWYFGEELKKMGMNIINDDITGRVHKDRKLLTGDSPFAANALGKLAAQEMLAAYAG.

Residues His-86, Glu-91, and His-123 each coordinate Zn(2+). Cys-185 serves as the catalytic Nucleophile.

It belongs to the peptidase C56 family. HchA subfamily. Homodimer.

The protein localises to the cytoplasm. The enzyme catalyses N(omega)-(1-hydroxy-2-oxopropyl)-L-arginyl-[protein] + H2O = lactate + L-arginyl-[protein] + H(+). The catalysed reaction is N(6)-(1-hydroxy-2-oxopropyl)-L-lysyl-[protein] + H2O = lactate + L-lysyl-[protein] + H(+). It carries out the reaction S-(1-hydroxy-2-oxopropyl)-L-cysteinyl-[protein] + H2O = lactate + L-cysteinyl-[protein] + H(+). It catalyses the reaction N(omega)-(1-hydroxy-2-oxoethyl)-L-arginyl-[protein] + H2O = L-arginyl-[protein] + glycolate + H(+). The enzyme catalyses N(6)-(1-hydroxy-2-oxoethyl)-L-lysyl-[protein] + H2O = glycolate + L-lysyl-[protein] + H(+). The catalysed reaction is S-(1-hydroxy-2-oxoethyl)-L-cysteinyl-[protein] + H2O = glycolate + L-cysteinyl-[protein] + H(+). It carries out the reaction N(2)-(1-hydroxy-2-oxopropyl)-dGTP + H2O = lactate + dGTP + H(+). It catalyses the reaction N(2)-(1-hydroxy-2-oxopropyl)-GTP + H2O = lactate + GTP + H(+). The enzyme catalyses N(2)-(1-hydroxy-2-oxopropyl)-GDP + H2O = lactate + GDP + H(+). The catalysed reaction is N(2)-(1-hydroxy-2-oxopropyl)-GMP + H2O = lactate + GMP + H(+). It carries out the reaction N(2)-(1-hydroxy-2-oxoethyl)-dGTP + H2O = dGTP + glycolate + H(+). It catalyses the reaction N(2)-(1-hydroxy-2-oxoethyl)-GTP + H2O = glycolate + GTP + H(+). The enzyme catalyses N(2)-(1-hydroxy-2-oxoethyl)-GDP + H2O = glycolate + GDP + H(+). The catalysed reaction is N(2)-(1-hydroxy-2-oxoethyl)-GMP + H2O = glycolate + GMP + H(+). It carries out the reaction an N(2)-(1-hydroxy-2-oxopropyl)-guanosine in RNA + H2O = a guanosine in RNA + lactate + H(+). It catalyses the reaction an N(2)-(1-hydroxy-2-oxopropyl)-2'-deoxyguanosine in DNA + H2O = a 2'-deoxyguanosine in DNA + lactate + H(+). The enzyme catalyses an N(2)-(1-hydroxy-2-oxoethyl)-guanosine in RNA + H2O = a guanosine in RNA + glycolate + H(+). The catalysed reaction is an N(2)-(1-hydroxy-2-oxoethyl)-2'-deoxyguanosine in DNA + H2O = a 2'-deoxyguanosine in DNA + glycolate + H(+). In terms of biological role, protein and nucleotide deglycase that catalyzes the deglycation of the Maillard adducts formed between amino groups of proteins or nucleotides and reactive carbonyl groups of glyoxals. Thus, functions as a protein deglycase that repairs methylglyoxal- and glyoxal-glycated proteins, and releases repaired proteins and lactate or glycolate, respectively. Deglycates cysteine, arginine and lysine residues in proteins, and thus reactivates these proteins by reversing glycation by glyoxals. Acts on early glycation intermediates (hemithioacetals and aminocarbinols), preventing the formation of Schiff bases and advanced glycation endproducts (AGE). Also functions as a nucleotide deglycase able to repair glycated guanine in the free nucleotide pool (GTP, GDP, GMP, dGTP) and in DNA and RNA. Is thus involved in a major nucleotide repair system named guanine glycation repair (GG repair), dedicated to reversing methylglyoxal and glyoxal damage via nucleotide sanitization and direct nucleic acid repair. Plays an important role in protecting cells from carbonyl stress. This Escherichia coli (strain 55989 / EAEC) protein is Protein/nucleic acid deglycase HchA.